We begin with the raw amino-acid sequence, 481 residues long: MQWEVVIGLEIHTQLATQSKIFSGSATTFGSEPNTQASLVDLGMPGVLPVLNQEAVRMACMFGLAIDAEIGPRNVFARKNYFYPDLPKGYQISQMDLPIVGKGHLDIALEDGTIKRIGVTRAHLEEDAGKSLHEDFNGATGIDLNRAGTPLLEIVSEPDMRSAKEAVAYVKAIHALVRYLGICDGNMAEGSLRCDCNVSVRPKGQVEFGTRCEIKNVNSFRFIERAINSEIQRQIDLIEDGGKVVQETRLYDPNKDETRSMRSKEEANDYRYFPDPDLLPVVIEQSFLDSVRAALPELPTQKVERFQSQYGLSAYDANVLASSREQADYFEQVVSIGGDAKLAANWVMVELGSLLNKLGVEIDQSPVSAEQLGGMLLRIRDNTISGKIAKTVFEAMAAGEGDADSIIESKGLKQVTDTGAIDKMLDEMLAANAEQVEQYRAADEAKRGKMFGFFVGQAMKASKGKANPGQVNQLLKAKLEG.

This sequence belongs to the GatB/GatE family. GatB subfamily. In terms of assembly, heterotrimer of A, B and C subunits.

The enzyme catalyses L-glutamyl-tRNA(Gln) + L-glutamine + ATP + H2O = L-glutaminyl-tRNA(Gln) + L-glutamate + ADP + phosphate + H(+). The catalysed reaction is L-aspartyl-tRNA(Asn) + L-glutamine + ATP + H2O = L-asparaginyl-tRNA(Asn) + L-glutamate + ADP + phosphate + 2 H(+). Allows the formation of correctly charged Asn-tRNA(Asn) or Gln-tRNA(Gln) through the transamidation of misacylated Asp-tRNA(Asn) or Glu-tRNA(Gln) in organisms which lack either or both of asparaginyl-tRNA or glutaminyl-tRNA synthetases. The reaction takes place in the presence of glutamine and ATP through an activated phospho-Asp-tRNA(Asn) or phospho-Glu-tRNA(Gln). This Pseudomonas entomophila (strain L48) protein is Aspartyl/glutamyl-tRNA(Asn/Gln) amidotransferase subunit B.